The chain runs to 354 residues: NADH-quinone oxidoreductase subunit H (354 aa).

Transmembrane regions (helical) follow at residues 23–43 (LVRA…LILW), 91–111 (YIIA…VVPF), 124–144 (LLYV…AGWA), 162–182 (ISYE…TGSL), 203–223 (ILSW…ISGV), 250–270 (GMAF…ISAM), 291–311 (IPGF…FIWL), and 330–350 (IFIP…VSPW).

The protein belongs to the complex I subunit 1 family. In terms of assembly, NDH-1 is composed of 14 different subunits. Subunits NuoA, H, J, K, L, M, N constitute the membrane sector of the complex.

It is found in the cell inner membrane. The catalysed reaction is a quinone + NADH + 5 H(+)(in) = a quinol + NAD(+) + 4 H(+)(out). Functionally, NDH-1 shuttles electrons from NADH, via FMN and iron-sulfur (Fe-S) centers, to quinones in the respiratory chain. The immediate electron acceptor for the enzyme in this species is believed to be ubiquinone. Couples the redox reaction to proton translocation (for every two electrons transferred, four hydrogen ions are translocated across the cytoplasmic membrane), and thus conserves the redox energy in a proton gradient. This subunit may bind ubiquinone. The protein is NADH-quinone oxidoreductase subunit H of Ralstonia nicotianae (strain ATCC BAA-1114 / GMI1000) (Ralstonia solanacearum).